The primary structure comprises 243 residues: Ubiquinone/menaquinone biosynthesis C-methyltransferase UbiE (243 aa).

S-adenosyl-L-methionine is bound by residues T69, D90, and 116–117 (DA).

This sequence belongs to the class I-like SAM-binding methyltransferase superfamily. MenG/UbiE family.

It catalyses the reaction a 2-demethylmenaquinol + S-adenosyl-L-methionine = a menaquinol + S-adenosyl-L-homocysteine + H(+). The enzyme catalyses a 2-methoxy-6-(all-trans-polyprenyl)benzene-1,4-diol + S-adenosyl-L-methionine = a 5-methoxy-2-methyl-3-(all-trans-polyprenyl)benzene-1,4-diol + S-adenosyl-L-homocysteine + H(+). It functions in the pathway quinol/quinone metabolism; menaquinone biosynthesis; menaquinol from 1,4-dihydroxy-2-naphthoate: step 2/2. Its pathway is cofactor biosynthesis; ubiquinone biosynthesis. Functionally, methyltransferase required for the conversion of demethylmenaquinol (DMKH2) to menaquinol (MKH2) and the conversion of 2-polyprenyl-6-methoxy-1,4-benzoquinol (DDMQH2) to 2-polyprenyl-3-methyl-6-methoxy-1,4-benzoquinol (DMQH2). This is Ubiquinone/menaquinone biosynthesis C-methyltransferase UbiE from Burkholderia multivorans (strain ATCC 17616 / 249).